A 108-amino-acid polypeptide reads, in one-letter code: Thiosulfate sulfurtransferase GlpE (108 aa).

Residues 17-105 (VSQSAILVDV…WLREFPQAIT (89 aa)) form the Rhodanese domain. Residue Cys-65 is the Cysteine persulfide intermediate of the active site.

Belongs to the GlpE family.

It is found in the cytoplasm. It catalyses the reaction thiosulfate + hydrogen cyanide = thiocyanate + sulfite + 2 H(+). The enzyme catalyses thiosulfate + [thioredoxin]-dithiol = [thioredoxin]-disulfide + hydrogen sulfide + sulfite + 2 H(+). Its function is as follows. Transferase that catalyzes the transfer of sulfur from thiosulfate to thiophilic acceptors such as cyanide or dithiols. May function in a CysM-independent thiosulfate assimilation pathway by catalyzing the conversion of thiosulfate to sulfite, which can then be used for L-cysteine biosynthesis. This is Thiosulfate sulfurtransferase GlpE from Proteus mirabilis (strain HI4320).